We begin with the raw amino-acid sequence, 134 residues long: DNA-directed RNA polymerase subunit omega (134 aa).

The protein belongs to the RNA polymerase subunit omega family. As to quaternary structure, the RNAP catalytic core consists of 2 alpha, 1 beta, 1 beta' and 1 omega subunit. When a sigma factor is associated with the core the holoenzyme is formed, which can initiate transcription.

It catalyses the reaction RNA(n) + a ribonucleoside 5'-triphosphate = RNA(n+1) + diphosphate. Promotes RNA polymerase assembly. Latches the N- and C-terminal regions of the beta' subunit thereby facilitating its interaction with the beta and alpha subunits. In Rhizobium etli (strain CIAT 652), this protein is DNA-directed RNA polymerase subunit omega.